The following is a 440-amino-acid chain: 3-phosphoshikimate 1-carboxyvinyltransferase (440 aa).

The 3-phosphoshikimate site is built by Lys-19, Ser-20, and Arg-24. Lys-19 lines the phosphoenolpyruvate pocket. Gly-92 and Arg-121 together coordinate phosphoenolpyruvate. 3-phosphoshikimate is bound by residues Ser-166, Gln-168, Asp-315, and Lys-342. Phosphoenolpyruvate is bound at residue Gln-168. Catalysis depends on Asp-315, which acts as the Proton acceptor. Phosphoenolpyruvate-binding residues include Arg-346 and Arg-399.

The protein belongs to the EPSP synthase family. Monomer.

The protein resides in the cytoplasm. It carries out the reaction 3-phosphoshikimate + phosphoenolpyruvate = 5-O-(1-carboxyvinyl)-3-phosphoshikimate + phosphate. Its pathway is metabolic intermediate biosynthesis; chorismate biosynthesis; chorismate from D-erythrose 4-phosphate and phosphoenolpyruvate: step 6/7. Functionally, catalyzes the transfer of the enolpyruvyl moiety of phosphoenolpyruvate (PEP) to the 5-hydroxyl of shikimate-3-phosphate (S3P) to produce enolpyruvyl shikimate-3-phosphate and inorganic phosphate. This is 3-phosphoshikimate 1-carboxyvinyltransferase from Leptospira borgpetersenii serovar Hardjo-bovis (strain JB197).